The sequence spans 233 residues: 3-dehydroquinate dehydratase (233 aa).

3-dehydroquinate contacts are provided by residues 39–41 and Arg73; that span reads EIR. The Proton donor/acceptor role is filled by His132. Residue Lys159 is the Schiff-base intermediate with substrate of the active site. 3-dehydroquinate contacts are provided by Arg196 and Gln219.

It belongs to the type-I 3-dehydroquinase family. As to quaternary structure, homodimer.

It carries out the reaction 3-dehydroquinate = 3-dehydroshikimate + H2O. It functions in the pathway metabolic intermediate biosynthesis; chorismate biosynthesis; chorismate from D-erythrose 4-phosphate and phosphoenolpyruvate: step 3/7. In terms of biological role, involved in the third step of the chorismate pathway, which leads to the biosynthesis of aromatic amino acids. Catalyzes the cis-dehydration of 3-dehydroquinate (DHQ) and introduces the first double bond of the aromatic ring to yield 3-dehydroshikimate. The sequence is that of 3-dehydroquinate dehydratase from Methanococcoides burtonii (strain DSM 6242 / NBRC 107633 / OCM 468 / ACE-M).